Here is a 653-residue protein sequence, read N- to C-terminus: Acetyl-coenzyme A synthetase (653 aa).

CoA contacts are provided by residues 196–199 and threonine 315; that span reads RGGK. ATP is bound by residues 391-393, 415-420, aspartate 506, and arginine 521; these read GEP and DTWWQT. Serine 529 provides a ligand contact to CoA. Arginine 532 contacts ATP. The Mg(2+) site is built by valine 543 and valine 548. Lysine 618 is modified (N6-acetyllysine).

The protein belongs to the ATP-dependent AMP-binding enzyme family. Requires Mg(2+) as cofactor. Post-translationally, acetylated. Deacetylation by the SIR2-homolog deacetylase activates the enzyme.

It carries out the reaction acetate + ATP + CoA = acetyl-CoA + AMP + diphosphate. Functionally, catalyzes the conversion of acetate into acetyl-CoA (AcCoA), an essential intermediate at the junction of anabolic and catabolic pathways. AcsA undergoes a two-step reaction. In the first half reaction, AcsA combines acetate with ATP to form acetyl-adenylate (AcAMP) intermediate. In the second half reaction, it can then transfer the acetyl group from AcAMP to the sulfhydryl group of CoA, forming the product AcCoA. The chain is Acetyl-coenzyme A synthetase from Laribacter hongkongensis (strain HLHK9).